The sequence spans 92 residues: Small ribosomal subunit protein bS18A (92 aa).

It belongs to the bacterial ribosomal protein bS18 family. In terms of assembly, part of the 30S ribosomal subunit. Forms a tight heterodimer with protein bS6.

Binds as a heterodimer with protein bS6 to the central domain of the 16S rRNA, where it helps stabilize the platform of the 30S subunit. This Cupriavidus pinatubonensis (strain JMP 134 / LMG 1197) (Cupriavidus necator (strain JMP 134)) protein is Small ribosomal subunit protein bS18A.